The chain runs to 190 residues: Potassium-transporting ATPase KdpC subunit (190 aa).

The helical transmembrane segment at 13 to 33 (VGFLLLTLMCGVVYPGIVTIF) threads the bilayer.

It belongs to the KdpC family. The system is composed of three essential subunits: KdpA, KdpB and KdpC.

It is found in the cell membrane. In terms of biological role, part of the high-affinity ATP-driven potassium transport (or Kdp) system, which catalyzes the hydrolysis of ATP coupled with the electrogenic transport of potassium into the cytoplasm. This subunit acts as a catalytic chaperone that increases the ATP-binding affinity of the ATP-hydrolyzing subunit KdpB by the formation of a transient KdpB/KdpC/ATP ternary complex. This Listeria monocytogenes serotype 4b (strain CLIP80459) protein is Potassium-transporting ATPase KdpC subunit.